A 150-amino-acid chain; its full sequence is Nucleoside diphosphate kinase (150 aa).

6 residues coordinate ATP: K9, F57, R85, T91, R102, and N112. H115 serves as the catalytic Pros-phosphohistidine intermediate.

This sequence belongs to the NDK family. Homotetramer. Mg(2+) serves as cofactor.

It is found in the cytoplasm. The enzyme catalyses a 2'-deoxyribonucleoside 5'-diphosphate + ATP = a 2'-deoxyribonucleoside 5'-triphosphate + ADP. It catalyses the reaction a ribonucleoside 5'-diphosphate + ATP = a ribonucleoside 5'-triphosphate + ADP. Its function is as follows. Major role in the synthesis of nucleoside triphosphates other than ATP. The ATP gamma phosphate is transferred to the NDP beta phosphate via a ping-pong mechanism, using a phosphorylated active-site intermediate. The protein is Nucleoside diphosphate kinase of Staphylococcus carnosus (strain TM300).